We begin with the raw amino-acid sequence, 277 residues long: Elongation factor Ts (277 aa).

The segment at threonine 81 to valine 84 is involved in Mg(2+) ion dislocation from EF-Tu.

This sequence belongs to the EF-Ts family.

The protein localises to the cytoplasm. Associates with the EF-Tu.GDP complex and induces the exchange of GDP to GTP. It remains bound to the aminoacyl-tRNA.EF-Tu.GTP complex up to the GTP hydrolysis stage on the ribosome. In Amoebophilus asiaticus (strain 5a2), this protein is Elongation factor Ts.